Here is a 109-residue protein sequence, read N- to C-terminus: Protein ripply2 (109 aa).

Residues 1 to 15 show a composition bias toward polar residues; that stretch reads MENITFTSGLNSEMD. Disordered regions lie at residues 1-42 and 88-109; these read MENI…RPAD and YEDPDTEDEEDYSDEEDEKELR. Residues 20 to 23 carry the WRPW motif motif; it reads WRPW. A compositionally biased stretch (basic and acidic residues) spans 30-42; the sequence is KAPDYKPYKRPAD. The ripply homology domain stretch occupies residues 53-88; it reads HPVKLFWPKSQCFDYLYEDAEVLLRNYPVQATICLY. Acidic residues predominate over residues 89 to 109; sequence EDPDTEDEEDYSDEEDEKELR.

Belongs to the ripply family. In terms of tissue distribution, first expressed in the paraxial mesoderm at the 90% epiboly stage, and subsequently confined to the presomitic mesoderm. Expressed in the rostral compartment of S-I and S-II.

It localises to the nucleus. Functionally, plays a role in somitogenesis. Required for somite segregation and establishment of rostrocaudal polarity in somites. In Danio rerio (Zebrafish), this protein is Protein ripply2.